We begin with the raw amino-acid sequence, 241 residues long: Lysoplasmalogenase TMEM86A (241 aa).

The Cytoplasmic segment spans residues 1–13 (MVSPVTVVKSEGP). Residues 14–30 (KLVPFFKATCVYFVLWL) form a helical membrane-spanning segment. Topologically, residues 31 to 36 (PSSSPS) are extracellular. The chain crosses the membrane as a helical span at residues 37-59 (WVSALIKCLPIFCLWLFLLAHGV). The Cytoplasmic portion of the chain corresponds to 60 to 67 (RFLLAHPS). The helical transmembrane segment at 68–87 (ASLIFVGLVFSAVGDAFLIW) threads the bilayer. The Extracellular segment spans residues 88-96 (QDHGYFEHG). The helical transmembrane segment at 97-113 (LLMFAVAHILYAAAFGM) threads the bilayer. The Cytoplasmic portion of the chain corresponds to 114–119 (RPLALR). Residues 120 to 136 (TGLVIGVLSGLCYALLY) form a helical membrane-spanning segment. Residues 137 to 142 (PGLSGA) lie on the Extracellular side of the membrane. Residues 143 to 159 (FTYLVGVYVALISFMGW) form a helical membrane-spanning segment. The Cytoplasmic segment spans residues 160-176 (RAMAGLRLVGAAWRWTE). Residues 177 to 195 (LAAGGGALLFILSDLTIAL) form a helical membrane-spanning segment. The Extracellular segment spans residues 196–206 (NKFCFPVPYSR). A helical membrane pass occupies residues 207-225 (ALIMSTYYAAQMLIALSAV). Residues 226 to 241 (ESREPVGEDYRLSKAD) lie on the Cytoplasmic side of the membrane.

The protein belongs to the TMEM86 family. In terms of tissue distribution, highly expressed in the jejunum, white adipose tissue, kidney and macrophages.

It is found in the endoplasmic reticulum membrane. The catalysed reaction is a 1-O-(1Z-alkenyl)-sn-glycero-3-phosphocholine + H2O = a 2,3-saturated aldehyde + sn-glycerol 3-phosphocholine. The enzyme catalyses a 1-O-(1Z-alkenyl)-sn-glycero-3-phosphoethanolamine + H2O = a 2,3-saturated aldehyde + sn-glycero-3-phosphoethanolamine. Functionally, catalyzes the hydrolysis of the vinyl ether bond of choline or ethanolamine lysoplasmalogens, forming fatty aldehyde and glycerophosphocholine or glycerophosphoethanolamine, respectively and is specific for the sn-2-deacylated (lyso) form of plasmalogen. Plays an important role in lysoplasmalogen metabolism in the adipocyte tissue and macrophages. This is Lysoplasmalogenase TMEM86A (Tmem86a) from Mus musculus (Mouse).